Reading from the N-terminus, the 344-residue chain is Inositol 2-dehydrogenase/D-chiro-inositol 3-dehydrogenase (344 aa).

Belongs to the Gfo/Idh/MocA family. As to quaternary structure, homotetramer.

The enzyme catalyses myo-inositol + NAD(+) = scyllo-inosose + NADH + H(+). It catalyses the reaction 1D-chiro-inositol + NAD(+) = scyllo-inosine + NADH + H(+). The protein operates within polyol metabolism; myo-inositol degradation into acetyl-CoA; acetyl-CoA from myo-inositol: step 1/7. Functionally, involved in the oxidation of myo-inositol (MI) and D-chiro-inositol (DCI) to 2-keto-myo-inositol (2KMI or 2-inosose) and 1-keto-D-chiro-inositol (1KDCI), respectively. This Bacillus velezensis (strain DSM 23117 / BGSC 10A6 / LMG 26770 / FZB42) (Bacillus amyloliquefaciens subsp. plantarum) protein is Inositol 2-dehydrogenase/D-chiro-inositol 3-dehydrogenase.